Consider the following 344-residue polypeptide: Phosphate acyltransferase (344 aa).

Belongs to the PlsX family. Homodimer. Probably interacts with PlsY.

It is found in the cytoplasm. The catalysed reaction is a fatty acyl-[ACP] + phosphate = an acyl phosphate + holo-[ACP]. It participates in lipid metabolism; phospholipid metabolism. Functionally, catalyzes the reversible formation of acyl-phosphate (acyl-PO(4)) from acyl-[acyl-carrier-protein] (acyl-ACP). This enzyme utilizes acyl-ACP as fatty acyl donor, but not acyl-CoA. The protein is Phosphate acyltransferase of Cyanothece sp. (strain PCC 7425 / ATCC 29141).